Reading from the N-terminus, the 487-residue chain is Serralysin (487 aa).

Residues 1–16 (MQSTKKAIEITESNFA) constitute a propeptide that is removed on maturation. A Zn(2+)-binding site is contributed by histidine 192. Glutamate 193 is a catalytic residue. Histidine 196, histidine 202, and tyrosine 232 together coordinate Zn(2+). The Ca(2+) site is built by arginine 269, glycine 271, threonine 273, aspartate 301, glycine 303, glycine 304, aspartate 306, threonine 343, glutamate 345, glycine 350, glycine 352, aspartate 354, asparagine 359, alanine 361, asparagine 363, glycine 367, glycine 368, alanine 369, aspartate 372, glycine 376, glycine 377, glycine 378, glycine 379, aspartate 381, glycine 385, glycine 386, alanine 387, glycine 388, aspartate 390, aspartate 399, aspartate 406, and aspartate 416. Hemolysin-type calcium-binding repeat units lie at residues 348 to 365 (IGGS…NNVL) and 366 to 383 (KGGA…ADEL).

It belongs to the peptidase M10B family. Ca(2+) serves as cofactor. Zn(2+) is required as a cofactor.

The protein resides in the secreted. It catalyses the reaction Preferential cleavage of bonds with hydrophobic residues in P1'.. Naturally present in the silkworm intestine and allows the emerging moth to dissolve its cocoon. This chain is Serralysin, found in Serratia marcescens (strain ATCC 21074 / E-15).